The chain runs to 405 residues: MDTAGMEHSVSWISSNSDELILRSWISSRMDIAELHRAGDDIKEMMKSEGYYSEPSKYEAELSDGNITFAYSYPIKAFEKFLGYYDRENRIAFNPSISMRTDFSFCLAACRYRKNGKTDTVVLDGYADNKYYKKAKFALDKFRSEYSINGSFDFYIKRYRRYQKAKGLSESSAVAAAVSRALISNVFGDDAAKDDIFVSRYARLVSGSGTRAAHDGISMWLSYPGMDSRDCVAFKVGKSNENLNYGVFPKYSDVATDNAHSIAVNSVFYGTWVSEKFSNVKRLISDHFDINDLLKIGENDMLRLNSILMSGGLIIQTPDSLRILKEILKFKSKNEGFYFTADTGPSIAIFSFDRSLIDEFRENVNDEYIEGSYDFKGYNNRMRDFIREAQEYFTQTPGEDEEDRL.

It belongs to the mevalonate 3,5-bisphosphate decarboxylase family. As to quaternary structure, homodimer.

It catalyses the reaction (R)-3,5-bisphosphomevalonate + H(+) = isopentenyl phosphate + phosphate + CO2. Its pathway is isoprenoid biosynthesis; isopentenyl diphosphate biosynthesis via mevalonate pathway. Catalyzes the ATP-independent decarboxylation of (R)-mevalonate 3,5-bisphosphate to isopentenyl phosphate. Functions in an alternative mevalonate pathway, only present in extreme acidophiles of the Thermoplasmatales order, which passes through mevalonate 3-phosphate rather than mevalonate 5-phosphate. The protein is Mevalonate 3,5-bisphosphate decarboxylase of Thermoplasma acidophilum (strain ATCC 25905 / DSM 1728 / JCM 9062 / NBRC 15155 / AMRC-C165).